The sequence spans 332 residues: tRNA (cytosine(38)-C(5))-methyltransferase (332 aa).

The 330-residue stretch at histidine 3–glutamate 332 folds into the SAM-dependent MTase C5-type domain. Residues isoleucine 12–glycine 14, aspartate 33–isoleucine 34, asparagine 55–isoleucine 56, and serine 75 contribute to the S-adenosyl-L-homocysteine site. Residue cysteine 78 is part of the active site. S-adenosyl-L-homocysteine contacts are provided by residues glutamine 79, serine 97, and asparagine 316–serine 317.

It belongs to the class I-like SAM-binding methyltransferase superfamily. C5-methyltransferase family.

Its subcellular location is the cytoplasm. The protein localises to the nucleus. It carries out the reaction cytidine(38) in tRNA + S-adenosyl-L-methionine = 5-methylcytidine(38) in tRNA + S-adenosyl-L-homocysteine + H(+). The enzyme catalyses a 2'-deoxycytidine in DNA + S-adenosyl-L-methionine = a 5-methyl-2'-deoxycytidine in DNA + S-adenosyl-L-homocysteine + H(+). Functionally, specifically methylates cytosine 38 in the anticodon loop of tRNA(Asp). Also has DNA (cytosine-5)-methyltransferase activity. Shows affinity for both tRNA(Asp) and DNA substrates. The polypeptide is tRNA (cytosine(38)-C(5))-methyltransferase (Spodoptera frugiperda (Fall armyworm)).